Reading from the N-terminus, the 303-residue chain is UDP-3-O-acyl-N-acetylglucosamine deacetylase (303 aa).

Residues His-77, His-236, and Asp-240 each contribute to the Zn(2+) site. Residue His-263 is the Proton donor of the active site.

It belongs to the LpxC family. Zn(2+) serves as cofactor.

The catalysed reaction is a UDP-3-O-[(3R)-3-hydroxyacyl]-N-acetyl-alpha-D-glucosamine + H2O = a UDP-3-O-[(3R)-3-hydroxyacyl]-alpha-D-glucosamine + acetate. Its pathway is glycolipid biosynthesis; lipid IV(A) biosynthesis; lipid IV(A) from (3R)-3-hydroxytetradecanoyl-[acyl-carrier-protein] and UDP-N-acetyl-alpha-D-glucosamine: step 2/6. Catalyzes the hydrolysis of UDP-3-O-myristoyl-N-acetylglucosamine to form UDP-3-O-myristoylglucosamine and acetate, the committed step in lipid A biosynthesis. The polypeptide is UDP-3-O-acyl-N-acetylglucosamine deacetylase (Ruthia magnifica subsp. Calyptogena magnifica).